The following is a 279-amino-acid chain: Thioredoxin-like 1-2, chloroplastic (279 aa).

Residues 1–34 (MAATAAQAVAVKGSVAVPPCGSRGRRRGAVASVR) constitute a chloroplast transit peptide. The Thioredoxin domain maps to 61–203 (PRRSRPVPRN…FRDALAKHKP (143 aa)). Residues C126 and C129 each act as nucleophile in the active site. An intrachain disulfide couples C126 to C129. A disordered region spans residues 242–279 (GDAAAAQELDRGSTKLSPPAKPLVKQGSEERSLVSSGR).

This sequence belongs to the thioredoxin family.

It localises to the plastid. Its subcellular location is the chloroplast. Its function is as follows. Probable thiol-disulfide oxidoreductase that may participate in various redox reactions. This is Thioredoxin-like 1-2, chloroplastic from Oryza sativa subsp. japonica (Rice).